A 545-amino-acid chain; its full sequence is Oligopeptide-binding protein OppA (545 aa).

A signal peptide spans 1 to 20 (MKKRWSIVTLMLIFTLVLSA). Residue Cys-21 is the site of N-palmitoyl cysteine attachment. The S-diacylglycerol cysteine moiety is linked to residue Cys-21. The residue at position 470 (Thr-470) is a Phosphothreonine.

This sequence belongs to the bacterial solute-binding protein 5 family. In terms of assembly, the complex is composed of two ATP-binding proteins (OppD and OppF), two transmembrane proteins (OppB and OppC) and a solute-binding protein (OppA). OppA interacts with FloT in detergent-resistant membranes (DRM). Colocalizes rarely with FloT membrane assemblies.

It is found in the cell membrane. Its subcellular location is the membrane raft. Part of the ABC transporter complex OppABCDF involved in the uptake of oligopeptides. Plays an important nutritional role. Binds peptides containing up to five amino acids residues regardless of their sequence, with highest affinity for tetra- and pentapeptides. Binds to the sporulation-promoting peptide PhrE (Ser-Arg-Asn-Val-Thr). Required for sporulation and genetic competence. The sequence is that of Oligopeptide-binding protein OppA from Bacillus subtilis (strain 168).